The primary structure comprises 110 residues: Early nodulin-12A (110 aa).

Positions 1–24 are cleaved as a signal peptide; the sequence is MASFFLSSLVLFLAALILVPQGLA. Positions 31–110 are disordered; the sequence is VYEPPVNGPP…HPTEEHNIHF (80 aa). Residues 32-43 show a composition bias toward pro residues; the sequence is YEPPVNGPPVNK. 3 consecutive repeat copies span residues 34–38, 39–43, and 44–48. Residues 34-88 form an 11 X 5 AA approximate tandem repeats of P-P-[VQRH]-[NKH]-[GKE] region; it reads PPVNGPPVNKPPQKETPVHKPPQKETPVHKPPQKEPPRHKPPQKEPPRHKPPHKK. Residues 45 to 81 show a composition bias toward basic and acidic residues; it reads PQKETPVHKPPQKETPVHKPPQKEPPRHKPPQKEPPR. One copy of the 4; approximate repeat lies at 49 to 53; sequence TPVHK. Repeat 5 spans residues 54 to 58; that stretch reads PPQKE. One copy of the 6; approximate repeat lies at 59-63; that stretch reads TPVHK. Repeat copies occupy residues 64–68, 69–73, 74–78, 79–83, and 84–88. Residues 82-93 show a composition bias toward basic residues; the sequence is HKPPHKKSHLHV. A compositionally biased stretch (basic and acidic residues) spans 101–110; it reads HPTEEHNIHF.

This sequence belongs to the plant proline-rich protein superfamily. ENOD12 family. In terms of tissue distribution, root nodules, stem and flower.

Its subcellular location is the secreted. It is found in the cell wall. Functionally, involved in the infection process during the plant-rhizobium interaction. The sequence is that of Early nodulin-12A (ENOD12A) from Pisum sativum (Garden pea).